The sequence spans 345 residues: Sulfate/thiosulfate import ATP-binding protein CysA (345 aa).

The region spanning 3–237 (IQVSGLCKHF…PRTEFVYQFV (235 aa)) is the ABC transporter domain. 35–42 (GPSGCGKT) provides a ligand contact to ATP.

The protein belongs to the ABC transporter superfamily. Sulfate/tungstate importer (TC 3.A.1.6) family. In terms of assembly, the complex is composed of two ATP-binding proteins (CysA), two transmembrane proteins (CysT and CysW) and a solute-binding protein (CysP).

It localises to the cell inner membrane. It catalyses the reaction sulfate(out) + ATP + H2O = sulfate(in) + ADP + phosphate + H(+). It carries out the reaction thiosulfate(out) + ATP + H2O = thiosulfate(in) + ADP + phosphate + H(+). Functionally, part of the ABC transporter complex CysAWTP involved in sulfate/thiosulfate import. Responsible for energy coupling to the transport system. The sequence is that of Sulfate/thiosulfate import ATP-binding protein CysA from Vibrio vulnificus (strain CMCP6).